A 213-amino-acid chain; its full sequence is MDLTDTQQAILALIAERIETDGVPPSQTEIARAFGFKGVRAAQYHLEALEQAGAIRRVPGQARGIRLAGAAAHARAAPAEEPVRDDVLRLPVLGRVAAGLPIGADIGSDDFVVLDRVFFSPSPDYLLKVQGDSMRDEGIFNGDLIGVHRTRDARSGQIVVARIDEEITVKLLKIGKDRIRLLPRNPDYAPIEVLPDQDFAIEGLYCGLLRPNR.

Residues 27–47 (QTEIARAFGFKGVRAAQYHLE) constitute a DNA-binding region (H-T-H motif). Active-site for autocatalytic cleavage activity residues include serine 133 and lysine 170.

The protein belongs to the peptidase S24 family. In terms of assembly, homodimer.

The enzyme catalyses Hydrolysis of Ala-|-Gly bond in repressor LexA.. In terms of biological role, represses a number of genes involved in the response to DNA damage (SOS response), including recA and lexA. In the presence of single-stranded DNA, RecA interacts with LexA causing an autocatalytic cleavage which disrupts the DNA-binding part of LexA, leading to derepression of the SOS regulon and eventually DNA repair. This is LexA repressor from Xanthomonas campestris.